Here is a 620-residue protein sequence, read N- to C-terminus: Eukaryotic translation initiation factor 2-alpha kinase 1 (620 aa).

The disordered stretch occupies residues 1–38 (MLGGGSVDGERDTDDDAAGAVAAPPAIDFPAEVSDPKY). The span at 18–28 (AGAVAAPPAID) shows a compositional bias: low complexity. Residues 85-104 (LHSKQVFKLLCQTFIKMGLL) carry the SIFI-degron motif. The 415-residue stretch at 167–581 (FEELAILGKG…ALQLLQSELF (415 aa)) folds into the Protein kinase domain. Residues 173–181 (LGKGGYGRV) and K196 contribute to the ATP site. At T283 the chain carries Phosphothreonine. An HRM 1 repeat occupies 408 to 413 (ACPYVM). The active-site Proton acceptor is D440. Residues T484 and T486 each carry the phosphothreonine; by autocatalysis modification. T491 carries the post-translational modification Phosphothreonine. Residues 550-555 (RCPVQA) form an HRM 2 repeat.

Belongs to the protein kinase superfamily. Ser/Thr protein kinase family. GCN2 subfamily. In terms of assembly, synthesized in an inactive form that binds to the N-terminal domain of CDC37. Has to be associated with a multiprotein complex containing Hsp90, CDC37 and PPP5C for maturation and activation by autophosphorylation. The phosphatase PPP5C modulates this activation. Homodimer; homodimerizes in presence of heme, forming a disulfide-linked inactive homodimer. Interacts with DELE1; binds both to full-length DELE1 and processed form of DELE1 (S-DELE1) in response to stress, leading to activate its protein kinase activity and trigger the integrated stress response (ISR). In terms of processing, activated by autophosphorylation; phosphorylated predominantly on serine and threonine residues, but also on tyrosine residues. Autophosphorylation at Thr-486 is required for kinase activation. The active autophosphorylated form apparently is largely refractory to cellular heme fluctuations. Ubiquitinated and degraded by the SIFI complex once the mitochondrial stress has been resolved, thereby providing stress response silencing. Within the SIFI complex, UBR4 initiates ubiquitin chain that are further elongated or branched by KCMF1.

The protein localises to the cytoplasm. It catalyses the reaction L-seryl-[protein] + ATP = O-phospho-L-seryl-[protein] + ADP + H(+). The catalysed reaction is L-threonyl-[protein] + ATP = O-phospho-L-threonyl-[protein] + ADP + H(+). With respect to regulation, in normal conditions, the protein kinase activity is inhibited; inhibition is relieved by various stress conditions. Inhibited by heme: in presence of heme, forms a disulfide-linked inactive homodimer. Heme depletion relieves inhibition and stimulates kinase activity by autophosphorylation. Inhibited by the heme metabolites biliverdin and bilirubin. Induced by oxidative stress generated by arsenite treatment. Binding of nitric oxide (NO) to the heme iron in the N-terminal heme-binding domain activates the kinase activity, while binding of carbon monoxide (CO) suppresses kinase activity. Protein kinase activity is also activated upon binding to DELE1 in response to various stress, triggering the integrated stress response (ISR): activated by full-length DELE1 in response to iron deficiency, while it is activated by the processed form of DELE1 (S-DELE1) in response to mitochondrial stress. Functionally, metabolic-stress sensing protein kinase that phosphorylates the alpha subunit of eukaryotic translation initiation factor 2 (EIF2S1/eIF-2-alpha) in response to various stress conditions. Key activator of the integrated stress response (ISR) required for adaptation to various stress, such as heme deficiency, oxidative stress, osmotic shock, mitochondrial dysfunction and heat shock. EIF2S1/eIF-2-alpha phosphorylation in response to stress converts EIF2S1/eIF-2-alpha in a global protein synthesis inhibitor, leading to a global attenuation of cap-dependent translation, while concomitantly initiating the preferential translation of ISR-specific mRNAs, such as the transcriptional activator ATF4, and hence allowing ATF4-mediated reprogramming. Acts as a key sensor of heme-deficiency: in normal conditions, binds hemin via a cysteine thiolate and histidine nitrogenous coordination, leading to inhibit the protein kinase activity. This binding occurs with moderate affinity, allowing it to sense the heme concentration within the cell: heme depletion relieves inhibition and stimulates kinase activity, activating the ISR. Thanks to this unique heme-sensing capacity, plays a crucial role to shut off protein synthesis during acute heme-deficient conditions. In red blood cells (RBCs), controls hemoglobin synthesis ensuring a coordinated regulation of the synthesis of its heme and globin moieties. It thereby plays an essential protective role for RBC survival in anemias of iron deficiency. Iron deficiency also triggers activation by full-length DELE1. Also activates the ISR in response to mitochondrial dysfunction: HRI/EIF2AK1 protein kinase activity is activated upon binding to the processed form of DELE1 (S-DELE1), thereby promoting the ATF4-mediated reprogramming. Also acts as an activator of mitophagy in response to mitochondrial damage: catalyzes phosphorylation of eIF-2-alpha (EIF2S1) following activation by S-DELE1, thereby promoting mitochondrial localization of EIF2S1, triggering PRKN-independent mitophagy. The protein is Eukaryotic translation initiation factor 2-alpha kinase 1 of Rattus norvegicus (Rat).